Consider the following 152-residue polypeptide: Acidic phospholipase A2 1 (152 aa).

An N-terminal signal peptide occupies residues 1–19; the sequence is MNPAYFLVLAAVCVSLLGA. Positions 20-27 are excised as a propeptide; it reads ANIPPQPL. Disulfide bonds link Cys-38–Cys-104, Cys-54–Cys-151, Cys-56–Cys-72, Cys-71–Cys-132, Cys-78–Cys-125, Cys-88–Cys-118, and Cys-111–Cys-123. Residues Tyr-55, Gly-57, and Gly-59 each coordinate Ca(2+). His-75 is an active-site residue. Residue Asp-76 coordinates Ca(2+). The active site involves Asp-126.

This sequence belongs to the phospholipase A2 family. Group I subfamily. D49 sub-subfamily. Ca(2+) is required as a cofactor. As to expression, expressed by the venom gland.

The protein resides in the secreted. It catalyses the reaction a 1,2-diacyl-sn-glycero-3-phosphocholine + H2O = a 1-acyl-sn-glycero-3-phosphocholine + a fatty acid + H(+). Its function is as follows. PLA2 catalyzes the calcium-dependent hydrolysis of the 2-acyl groups in 3-sn-phosphoglycerides. The sequence is that of Acidic phospholipase A2 1 from Bungarus candidus (Malayan krait).